We begin with the raw amino-acid sequence, 43 residues long: METATLVAISISGLLVSFTGYALYTAFGQPSQQLRDPFEEHGD.

The helical transmembrane segment at 5–27 (TLVAISISGLLVSFTGYALYTAF) threads the bilayer.

Belongs to the PsbN family.

The protein resides in the plastid. It localises to the chloroplast thylakoid membrane. Its function is as follows. May play a role in photosystem I and II biogenesis. In Eucalyptus globulus subsp. globulus (Tasmanian blue gum), this protein is Protein PsbN.